Reading from the N-terminus, the 100-residue chain is Large ribosomal subunit protein uL23 (100 aa).

The protein belongs to the universal ribosomal protein uL23 family. As to quaternary structure, part of the 50S ribosomal subunit. Contacts protein L29, and trigger factor when it is bound to the ribosome.

One of the early assembly proteins it binds 23S rRNA. One of the proteins that surrounds the polypeptide exit tunnel on the outside of the ribosome. Forms the main docking site for trigger factor binding to the ribosome. The chain is Large ribosomal subunit protein uL23 from Mycobacterium sp. (strain JLS).